The following is a 95-amino-acid chain: Co-chaperonin GroES (95 aa).

This sequence belongs to the GroES chaperonin family. As to quaternary structure, heptamer of 7 subunits arranged in a ring. Interacts with the chaperonin GroEL.

The protein localises to the cytoplasm. Its function is as follows. Together with the chaperonin GroEL, plays an essential role in assisting protein folding. The GroEL-GroES system forms a nano-cage that allows encapsulation of the non-native substrate proteins and provides a physical environment optimized to promote and accelerate protein folding. GroES binds to the apical surface of the GroEL ring, thereby capping the opening of the GroEL channel. The protein is Co-chaperonin GroES of Francisella tularensis subsp. tularensis (strain FSC 198).